We begin with the raw amino-acid sequence, 88 residues long: Phosphocarrier protein HPr (88 aa).

In terms of domain architecture, HPr spans 1 to 88 (MEKRDFHVVA…ETMKKEGLSE (88 aa)). Catalysis depends on His-15, which acts as the Pros-phosphohistidine intermediate. Phosphoserine; by HPrK/P is present on Ser-46.

This sequence belongs to the HPr family.

It localises to the cytoplasm. Its activity is regulated as follows. Phosphorylation on Ser-46 inhibits the phosphoryl transfer from enzyme I to HPr. Its function is as follows. General (non sugar-specific) component of the phosphoenolpyruvate-dependent sugar phosphotransferase system (sugar PTS). This major carbohydrate active-transport system catalyzes the phosphorylation of incoming sugar substrates concomitantly with their translocation across the cell membrane. The phosphoryl group from phosphoenolpyruvate (PEP) is transferred to the phosphoryl carrier protein HPr by enzyme I. Phospho-HPr then transfers it to the PTS EIIA domain. P-Ser-HPr interacts with the catabolite control protein A (CcpA), forming a complex that binds to DNA at the catabolite response elements cre, operator sites preceding a large number of catabolite-regulated genes. Thus, P-Ser-HPr is a corepressor in carbon catabolite repression (CCR), a mechanism that allows bacteria to coordinate and optimize the utilization of available carbon sources. P-Ser-HPr also plays a role in inducer exclusion, in which it probably interacts with several non-PTS permeases and inhibits their transport activity. This Latilactobacillus sakei (Lactobacillus sakei) protein is Phosphocarrier protein HPr (ptsH).